The sequence spans 290 residues: Endonuclease 2 (290 aa).

The N-terminal stretch at 1–27 (MANQKGLHVVMMIITVWLLYAAPNIHG) is a signal peptide. Residues tryptophan 28 and histidine 33 each contribute to the a divalent metal cation site. A substrate-binding site is contributed by 28 to 33 (WGKEGH). Cysteine 37 and cysteine 68 form a disulfide bridge. Residues aspartate 72 and histidine 85 each contribute to the a divalent metal cation site. Residues 72-76 (DRVKF), 85-88 (HYIN), and 94-99 (SYQYNR) each bind substrate. 3 disulfides stabilise this stretch: cysteine 93/cysteine 245, cysteine 101/cysteine 111, and cysteine 226/cysteine 232. Substrate contacts are provided by asparagine 118 and tyrosine 136. A glycan (N-linked (GlcNAc...) asparagine) is linked at asparagine 118. Residue asparagine 137 is glycosylated (N-linked (GlcNAc...) asparagine). 5 residues coordinate a divalent metal cation: histidine 147, aspartate 151, histidine 157, histidine 181, and aspartate 185. A substrate binding region spans residues 147–196 (HFMGDIHQPLHVSYASDKGGNTIEVHWYTRKANLHHIWDSNIIETAEADL). N-linked (GlcNAc...) asparagine glycosylation occurs at asparagine 211. Positions 283-290 (ATLNRIFG) are cleaved as a propeptide — removed in mature form.

This sequence belongs to the nuclease type I family. As to quaternary structure, monomer. It depends on Mn(2+) as a cofactor. Ca(2+) serves as cofactor. Zn(2+) is required as a cofactor. In terms of processing, N-glycosylation is required for enzymatic stability and activity.

It carries out the reaction Endonucleolytic cleavage to 5'-phosphomononucleotide and 5'-phosphooligonucleotide end-products.. Its activity is regulated as follows. ssDNase activity is inhibited by the divalent cation chelator EDTA and the reducing agent DTT. Divalent metal ions (e.g. Ca(2+), Mg(2+) and Zn(2+)) and DTT represses RNase activity. RNase activity is enhanced by EDTA. Also repressed by vanadate (VO(4)(3-)) and phosphate (PO(4)(3-)) by occupying the active site. Endonuclease mostly active on RNA and ssDNA, and to a lower extent, on dsDNA. Can cleave mismatch regions in heteroduplex DNA containing single base pair mismatches or insertion/deletion bases. In contradiction with PubMed:22506810, cannot hydrolyze single-stranded DNA and does not cleave mismatches. The polypeptide is Endonuclease 2 (Arabidopsis thaliana (Mouse-ear cress)).